The chain runs to 406 residues: Arginine biosynthesis bifunctional protein ArgJ (406 aa).

The substrate site is built by T152, K179, T190, E277, N401, and S406. The Nucleophile role is filled by T190.

The protein belongs to the ArgJ family. In terms of assembly, heterotetramer of two alpha and two beta chains.

The protein localises to the cytoplasm. It catalyses the reaction N(2)-acetyl-L-ornithine + L-glutamate = N-acetyl-L-glutamate + L-ornithine. The catalysed reaction is L-glutamate + acetyl-CoA = N-acetyl-L-glutamate + CoA + H(+). It functions in the pathway amino-acid biosynthesis; L-arginine biosynthesis; L-ornithine and N-acetyl-L-glutamate from L-glutamate and N(2)-acetyl-L-ornithine (cyclic): step 1/1. The protein operates within amino-acid biosynthesis; L-arginine biosynthesis; N(2)-acetyl-L-ornithine from L-glutamate: step 1/4. Functionally, catalyzes two activities which are involved in the cyclic version of arginine biosynthesis: the synthesis of N-acetylglutamate from glutamate and acetyl-CoA as the acetyl donor, and of ornithine by transacetylation between N(2)-acetylornithine and glutamate. The sequence is that of Arginine biosynthesis bifunctional protein ArgJ from Neisseria gonorrhoeae (strain ATCC 700825 / FA 1090).